The following is a 398-amino-acid chain: Small ribosomal subunit protein uS3m (398 aa).

This sequence belongs to the universal ribosomal protein uS3 family. Component of the mitochondrial small ribosomal subunit (mt-SSU). Mature yeast 74S mitochondrial ribosomes consist of a small (37S) and a large (54S) subunit. The 37S small subunit contains a 15S ribosomal RNA (15S mt-rRNA) and 34 different proteins. The 54S large subunit contains a 21S rRNA (21S mt-rRNA) and 46 different proteins. uS3m, uS4m and uS5m form the narrow entry site of the mRNA channel.

The protein resides in the mitochondrion. Component of the mitochondrial ribosome (mitoribosome), a dedicated translation machinery responsible for the synthesis of mitochondrial genome-encoded proteins, including at least some of the essential transmembrane subunits of the mitochondrial respiratory chain. The mitoribosomes are attached to the mitochondrial inner membrane and translation products are cotranslationally integrated into the membrane. uS3m is essential for mitochondrial protein synthesis and required for the maturation of small ribosomal subunits. The protein is Small ribosomal subunit protein uS3m (VAR1) of Saccharomyces cerevisiae (strain ATCC 204508 / S288c) (Baker's yeast).